A 417-amino-acid polypeptide reads, in one-letter code: Tryptophan synthase beta chain (417 aa).

K99 bears the N6-(pyridoxal phosphate)lysine mark.

It belongs to the TrpB family. As to quaternary structure, tetramer of two alpha and two beta chains. Pyridoxal 5'-phosphate is required as a cofactor.

It carries out the reaction (1S,2R)-1-C-(indol-3-yl)glycerol 3-phosphate + L-serine = D-glyceraldehyde 3-phosphate + L-tryptophan + H2O. It participates in amino-acid biosynthesis; L-tryptophan biosynthesis; L-tryptophan from chorismate: step 5/5. The beta subunit is responsible for the synthesis of L-tryptophan from indole and L-serine. The protein is Tryptophan synthase beta chain of Corynebacterium glutamicum (strain R).